Consider the following 256-residue polypeptide: Dioxygenase lolE1 (256 aa).

H125, D127, and H203 together coordinate Fe cation.

It belongs to the PhyH family. As to quaternary structure, homodimer. Fe cation is required as a cofactor.

It participates in alkaloid biosynthesis. In terms of biological role, dioxygenase; part of the gene cluster that mediates the biosynthesis of loline alkaloids, potent insecticidal agents composed of a pyrrolizidine ring system and an uncommon ether bridge linking carbons 2 and 7. Lolines are structurally differentiated by the various modifications of the L-amino group and include norloline, loline, N-methylloline, N-acetylloline, N-acetylnorloline, and N-formylloline. The first committed step is the condensation of O-acetyl-L-homoserine (derived from L-aspartic acid) and L-proline, probably catalyzed by the gamma-type pyridoxal 5'-phosphate(PLP)-dependent enzyme lolC, to give the diamino diacid, NACPP. Ensuing cyclization, decarboxylation, and acetylation steps yield 1-exo-acetamidopyrrolizidine (AcAP). LolO is required for installation of the ether bridge upon the pathway intermediate, 1-exo-acetamidopyrrolizidine (AcAP). In sequential 2-oxoglutarate- and O(2)-consuming steps, lolO removes hydrogens from C2 and C7 of AcAP to form both carbon-oxygen bonds in N-acetylnorloline (NANL), the precursor to all other lolines. The enzymes lolD, lolE, lolF and lolT have also been proposed to be involved in the ether-bridge installation. Further processing of the exocyclic moiety of NANL by fungal N-acetamidase (LolN), methyltransferase (LolM), and cytochrome P450 (LolP) enzymes, with occasional involvement of a plant acetyltransferase, generates the other known lolines. LolN transforms NANL to norlonine which is monomethylated and dimethylated to respectively lonine and N-methyllonine (NML) by lolM. LolP catalyzes hydroxylation of the methyl group in N-methylloline (NML) and further oxygenation to N-formylloline (NFL). A plant acetyltransferase is responsible for the acetylation of loline to form N-acetylloline (NAL). LolA might interact with aspartate kinase to prevent feedback inhibition of its activity by these end products and thereby promote production of L-homoserine from L-aspartate. This Epichloe uncinata (Endophyte fungus) protein is Dioxygenase lolE1.